The primary structure comprises 298 residues: Probable phosphoserine phosphatase (298 aa).

Aspartate 82 functions as the Nucleophile in the catalytic mechanism. Mg(2+) contacts are provided by aspartate 82 and aspartate 84. Aspartate 84 (proton donor) is an active-site residue. Residues glutamate 91, arginine 127, 170–171 (SG), and lysine 217 contribute to the substrate site. Aspartate 240 is a Mg(2+) binding site. Residue asparagine 243 coordinates substrate.

Belongs to the HAD-like hydrolase superfamily. SerB family. Requires Mg(2+) as cofactor.

It catalyses the reaction O-phospho-L-serine + H2O = L-serine + phosphate. The catalysed reaction is O-phospho-D-serine + H2O = D-serine + phosphate. It functions in the pathway amino-acid biosynthesis; L-serine biosynthesis; L-serine from 3-phospho-D-glycerate: step 3/3. This chain is Probable phosphoserine phosphatase, found in Schizosaccharomyces pombe (strain 972 / ATCC 24843) (Fission yeast).